A 290-amino-acid chain; its full sequence is UPF0761 membrane protein YihY (290 aa).

Helical transmembrane passes span 44–64, 104–124, 140–160, 183–203, 210–230, and 244–264; these read LLSL…FPMF, VGAC…DSAL, FAVY…SLAI, IFPL…VPTI, AIVG…GFAL, and VLAV…IVLL.

The protein belongs to the UPF0761 family.

The protein localises to the cell inner membrane. The chain is UPF0761 membrane protein YihY from Escherichia coli O7:K1 (strain IAI39 / ExPEC).